Consider the following 144-residue polypeptide: Transcription antitermination protein NusB (144 aa).

The protein belongs to the NusB family.

Its function is as follows. Involved in transcription antitermination. Required for transcription of ribosomal RNA (rRNA) genes. Binds specifically to the boxA antiterminator sequence of the ribosomal RNA (rrn) operons. This Histophilus somni (strain 2336) (Haemophilus somnus) protein is Transcription antitermination protein NusB.